Consider the following 136-residue polypeptide: Cancer/testis antigen 62 (136 aa).

The tract at residues M1–Y22 is disordered.

Testis specific. Expressed in cancer cell lines.

In Homo sapiens (Human), this protein is Cancer/testis antigen 62 (CT62).